A 147-amino-acid polypeptide reads, in one-letter code: Large ribosomal subunit protein bL9 (147 aa).

The protein belongs to the bacterial ribosomal protein bL9 family.

Functionally, binds to the 23S rRNA. The sequence is that of Large ribosomal subunit protein bL9 from Campylobacter jejuni subsp. jejuni serotype O:6 (strain 81116 / NCTC 11828).